The sequence spans 147 residues: Large-conductance mechanosensitive channel (147 aa).

The next 2 helical transmembrane spans lie at 14–34 (VVDM…VKSL) and 85–105 (FGLF…LFMI).

It belongs to the MscL family. As to quaternary structure, homopentamer.

The protein resides in the cell inner membrane. Its function is as follows. Channel that opens in response to stretch forces in the membrane lipid bilayer. May participate in the regulation of osmotic pressure changes within the cell. The sequence is that of Large-conductance mechanosensitive channel from Tolumonas auensis (strain DSM 9187 / NBRC 110442 / TA 4).